The chain runs to 387 residues: GDSL esterase/lipase At2g23540 (387 aa).

The first 32 residues, methionine 1–alanine 32, serve as a signal peptide directing secretion. The active-site Nucleophile is the serine 55. Residues asparagine 139 and asparagine 159 are each glycosylated (N-linked (GlcNAc...) asparagine). Active-site residues include aspartate 352 and histidine 355. A glycan (N-linked (GlcNAc...) asparagine) is linked at asparagine 380.

It belongs to the 'GDSL' lipolytic enzyme family.

It is found in the secreted. This is GDSL esterase/lipase At2g23540 from Arabidopsis thaliana (Mouse-ear cress).